A 220-amino-acid chain; its full sequence is UPF0319 protein YccT (220 aa).

The signal sequence occupies residues 1 to 20 (MKTGALATFLALCLPVTVFA).

Belongs to the UPF0319 family.

In Salmonella paratyphi A (strain ATCC 9150 / SARB42), this protein is UPF0319 protein YccT.